A 142-amino-acid polypeptide reads, in one-letter code: Large ribosomal subunit protein bL19 (142 aa).

It belongs to the bacterial ribosomal protein bL19 family.

Its function is as follows. This protein is located at the 30S-50S ribosomal subunit interface and may play a role in the structure and function of the aminoacyl-tRNA binding site. This is Large ribosomal subunit protein bL19 from Rickettsia bellii (strain OSU 85-389).